The chain runs to 188 residues: ATP synthase subunit b (188 aa).

Residues 19-39 (VYVLGATIVSFLVLFLFITYF) form a helical membrane-spanning segment.

This sequence belongs to the ATPase B chain family. F-type ATPases have 2 components, F(1) - the catalytic core - and F(0) - the membrane proton channel. F(1) has five subunits: alpha(3), beta(3), gamma(1), delta(1), epsilon(1). F(0) has three main subunits: a(1), b(2) and c(10-14). The alpha and beta chains form an alternating ring which encloses part of the gamma chain. F(1) is attached to F(0) by a central stalk formed by the gamma and epsilon chains, while a peripheral stalk is formed by the delta and b chains.

Its subcellular location is the cell membrane. Its function is as follows. F(1)F(0) ATP synthase produces ATP from ADP in the presence of a proton or sodium gradient. F-type ATPases consist of two structural domains, F(1) containing the extramembraneous catalytic core and F(0) containing the membrane proton channel, linked together by a central stalk and a peripheral stalk. During catalysis, ATP synthesis in the catalytic domain of F(1) is coupled via a rotary mechanism of the central stalk subunits to proton translocation. In terms of biological role, component of the F(0) channel, it forms part of the peripheral stalk, linking F(1) to F(0). This chain is ATP synthase subunit b, found in Mesomycoplasma hyopneumoniae (strain 7448) (Mycoplasma hyopneumoniae).